The following is a 652-amino-acid chain: DNA ligase (652 aa).

NAD(+) contacts are provided by residues 29–33 (DSDYD), 78–79 (SL), and E107. The active-site N6-AMP-lysine intermediate is the K109. The NAD(+) site is built by R130, E164, K278, and K302. C395, C398, C413, and C418 together coordinate Zn(2+). The 76-residue stretch at 577–652 (NSDAALFGLT…IEDEDWLRKL (76 aa)) folds into the BRCT domain.

Belongs to the NAD-dependent DNA ligase family. LigA subfamily. Mg(2+) serves as cofactor. It depends on Mn(2+) as a cofactor.

The enzyme catalyses NAD(+) + (deoxyribonucleotide)n-3'-hydroxyl + 5'-phospho-(deoxyribonucleotide)m = (deoxyribonucleotide)n+m + AMP + beta-nicotinamide D-nucleotide.. Its function is as follows. DNA ligase that catalyzes the formation of phosphodiester linkages between 5'-phosphoryl and 3'-hydroxyl groups in double-stranded DNA using NAD as a coenzyme and as the energy source for the reaction. It is essential for DNA replication and repair of damaged DNA. This Streptococcus pyogenes serotype M18 (strain MGAS8232) protein is DNA ligase.